Here is a 256-residue protein sequence, read N- to C-terminus: Trans-aconitate 2-methyltransferase (256 aa).

The protein belongs to the methyltransferase superfamily. Tam family.

The protein resides in the cytoplasm. The enzyme catalyses trans-aconitate + S-adenosyl-L-methionine = (E)-3-(methoxycarbonyl)pent-2-enedioate + S-adenosyl-L-homocysteine. Catalyzes the S-adenosylmethionine monomethyl esterification of trans-aconitate. The protein is Trans-aconitate 2-methyltransferase of Agrobacterium fabrum (strain C58 / ATCC 33970) (Agrobacterium tumefaciens (strain C58)).